The following is a 372-amino-acid chain: Anhydro-N-acetylmuramic acid kinase (372 aa).

12 to 19 (GTSMDALD) contributes to the ATP binding site.

This sequence belongs to the anhydro-N-acetylmuramic acid kinase family.

The enzyme catalyses 1,6-anhydro-N-acetyl-beta-muramate + ATP + H2O = N-acetyl-D-muramate 6-phosphate + ADP + H(+). Its pathway is amino-sugar metabolism; 1,6-anhydro-N-acetylmuramate degradation. The protein operates within cell wall biogenesis; peptidoglycan recycling. Functionally, catalyzes the specific phosphorylation of 1,6-anhydro-N-acetylmuramic acid (anhMurNAc) with the simultaneous cleavage of the 1,6-anhydro ring, generating MurNAc-6-P. Is required for the utilization of anhMurNAc either imported from the medium or derived from its own cell wall murein, and thus plays a role in cell wall recycling. In Coxiella burnetii (strain CbuK_Q154) (Coxiella burnetii (strain Q154)), this protein is Anhydro-N-acetylmuramic acid kinase.